We begin with the raw amino-acid sequence, 514 residues long: Ribonuclease Y (514 aa).

A helical membrane pass occupies residues 3–23 (YMIIYEIIAGILIVVAILIHF). Residues 204–289 (TVHVVTLPND…EMVEKAEKEL (86 aa)) enclose the KH domain. The 94-residue stretch at 330–423 (VLKHSVEVAY…VQAADAISAA (94 aa)) folds into the HD domain.

It belongs to the RNase Y family.

The protein resides in the cell membrane. Functionally, endoribonuclease that initiates mRNA decay. This Clostridium kluyveri (strain ATCC 8527 / DSM 555 / NBRC 12016 / NCIMB 10680 / K1) protein is Ribonuclease Y.